The chain runs to 788 residues: Histidine--tRNA ligase, cytoplasmic (788 aa).

The segment at 252 to 286 (PQACEENEAGSSTENPHASGEKPKGDKKSKKKKTL) is disordered.

The protein belongs to the class-II aminoacyl-tRNA synthetase family. As to quaternary structure, homodimer.

It catalyses the reaction tRNA(His) + L-histidine + ATP = L-histidyl-tRNA(His) + AMP + diphosphate + H(+). This Oryza sativa subsp. japonica (Rice) protein is Histidine--tRNA ligase, cytoplasmic.